The primary structure comprises 198 residues: Protein GrpE (198 aa).

A disordered region spans residues 1 to 32 (MTTEKETATPADVEVASQEEQIDQTTEAQVEE).

The protein belongs to the GrpE family. Homodimer.

It is found in the cytoplasm. Its function is as follows. Participates actively in the response to hyperosmotic and heat shock by preventing the aggregation of stress-denatured proteins, in association with DnaK and GrpE. It is the nucleotide exchange factor for DnaK and may function as a thermosensor. Unfolded proteins bind initially to DnaJ; upon interaction with the DnaJ-bound protein, DnaK hydrolyzes its bound ATP, resulting in the formation of a stable complex. GrpE releases ADP from DnaK; ATP binding to DnaK triggers the release of the substrate protein, thus completing the reaction cycle. Several rounds of ATP-dependent interactions between DnaJ, DnaK and GrpE are required for fully efficient folding. The polypeptide is Protein GrpE (Haemophilus ducreyi (strain 35000HP / ATCC 700724)).